Reading from the N-terminus, the 651-residue chain is DNA mismatch repair protein MutL (651 aa).

Residues 383-405 form a disordered region; sequence TAAEEPTPAPTSPDLEIGDLDDQ.

It belongs to the DNA mismatch repair MutL/HexB family.

In terms of biological role, this protein is involved in the repair of mismatches in DNA. It is required for dam-dependent methyl-directed DNA mismatch repair. May act as a 'molecular matchmaker', a protein that promotes the formation of a stable complex between two or more DNA-binding proteins in an ATP-dependent manner without itself being part of a final effector complex. The protein is DNA mismatch repair protein MutL of Lacticaseibacillus paracasei (strain ATCC 334 / BCRC 17002 / CCUG 31169 / CIP 107868 / KCTC 3260 / NRRL B-441) (Lactobacillus paracasei).